Consider the following 347-residue polypeptide: Probable RNA methyltransferase azo0122 (347 aa).

The Proton acceptor role is filled by Glu-89. One can recognise a Radical SAM core domain in the interval 92–318 (LLLRDGLCVS…AKLRQSAGQD (227 aa)). Cysteines 99 and 323 form a disulfide. [4Fe-4S] cluster is bound by residues Cys-106, Cys-110, and Cys-113. Residues 151–152 (GE), Ser-181, 204–206 (SLH), and Asn-280 contribute to the S-adenosyl-L-methionine site. The active-site S-methylcysteine intermediate is Cys-323.

It belongs to the radical SAM superfamily. RlmN family. Requires [4Fe-4S] cluster as cofactor.

It localises to the cytoplasm. This chain is Probable RNA methyltransferase azo0122, found in Azoarcus sp. (strain BH72).